A 177-amino-acid chain; its full sequence is Large ribosomal subunit protein bL9 (177 aa).

The segment at 151–177 (VEEEPAEEVEAPAETEVAEDAEEATEA) is disordered.

Belongs to the bacterial ribosomal protein bL9 family.

Binds to the 23S rRNA. This chain is Large ribosomal subunit protein bL9, found in Maridesulfovibrio salexigens (strain ATCC 14822 / DSM 2638 / NCIMB 8403 / VKM B-1763) (Desulfovibrio salexigens).